Consider the following 212-residue polypeptide: Large ribosomal subunit protein bL25 (212 aa).

Residues 183 to 212 (HDLPVASIHKPKGAKADDAEGEEGEEGGEE) are disordered. The segment covering 201–212 (AEGEEGEEGGEE) has biased composition (acidic residues).

This sequence belongs to the bacterial ribosomal protein bL25 family. CTC subfamily. As to quaternary structure, part of the 50S ribosomal subunit; part of the 5S rRNA/L5/L18/L25 subcomplex. Contacts the 5S rRNA. Binds to the 5S rRNA independently of L5 and L18.

In terms of biological role, this is one of the proteins that binds to the 5S RNA in the ribosome where it forms part of the central protuberance. This is Large ribosomal subunit protein bL25 from Marinobacter nauticus (strain ATCC 700491 / DSM 11845 / VT8) (Marinobacter aquaeolei).